Consider the following 386-residue polypeptide: 2-isopropylmalate synthase (386 aa).

Positions 12-265 (VRIFDTTLRD…EVNIKTYKLY (254 aa)) constitute a Pyruvate carboxyltransferase domain. Residues Asp21, His203, His205, and Asn239 each coordinate a divalent metal cation.

The protein belongs to the alpha-IPM synthase/homocitrate synthase family. As to quaternary structure, homodimer. A divalent metal cation serves as cofactor.

The catalysed reaction is 3-methyl-2-oxobutanoate + acetyl-CoA + H2O = (2S)-2-isopropylmalate + CoA + H(+). It participates in amino-acid biosynthesis; L-leucine biosynthesis; L-leucine from 3-methyl-2-oxobutanoate: step 1/4. Its function is as follows. Catalyzes the condensation of the acetyl group of acetyl-CoA with 3-methyl-2-oxobutanoate (2-oxoisovalerate) to form 3-carboxy-3-hydroxy-4-methylpentanoate (2-isopropylmalate). Carries out the first step of the leucine biosynthesis pathway. The protein is 2-isopropylmalate synthase (leuA) of Sulfurisphaera tokodaii (strain DSM 16993 / JCM 10545 / NBRC 100140 / 7) (Sulfolobus tokodaii).